A 315-amino-acid polypeptide reads, in one-letter code: MARIAYLGPEGTFTQAALLEIAAAGLVPGHDDGGAQPLPVDSTPAALDAVRTGAAEFACVPIENSIDGSLAPTLDSLAIGSPLQVFAETTLDVAFSIVVKPGVGAADVRTLAAFPVAAAQVRQWLTAHLPNVELHPAYSNADGARQVAEGQVDAAVTSPLAAAHWALQSLADGVVDESNARTRFLLIGVPGPPPPRTGTDRTSAVLRIANVPGALLDALTEFGMRGIDLTRIESRPTRTGLGTYMFFIDCVGHIADDAVAEALKALHRRCADVRYLGSWPTGQTYAAQPPPADEAAIWLQQLREGKPEASPEPPL.

One can recognise a Prephenate dehydratase domain in the interval arginine 3–valine 189. Positions serine 203–proline 280 constitute an ACT domain.

In terms of assembly, homodimer.

The catalysed reaction is prephenate + H(+) = 3-phenylpyruvate + CO2 + H2O. Its pathway is amino-acid biosynthesis; L-phenylalanine biosynthesis; phenylpyruvate from prephenate: step 1/1. This chain is Prephenate dehydratase (pheA), found in Mycobacterium ulcerans (strain Agy99).